The primary structure comprises 299 residues: tRNA dimethylallyltransferase (299 aa).

13–20 (GPTASGKT) lines the ATP pocket. 15–20 (TASGKT) provides a ligand contact to substrate. Positions 38–41 (DSRQ) are interaction with substrate tRNA.

This sequence belongs to the IPP transferase family. In terms of assembly, monomer. It depends on Mg(2+) as a cofactor.

The enzyme catalyses adenosine(37) in tRNA + dimethylallyl diphosphate = N(6)-dimethylallyladenosine(37) in tRNA + diphosphate. Its function is as follows. Catalyzes the transfer of a dimethylallyl group onto the adenine at position 37 in tRNAs that read codons beginning with uridine, leading to the formation of N6-(dimethylallyl)adenosine (i(6)A). This chain is tRNA dimethylallyltransferase, found in Prochlorococcus marinus (strain SARG / CCMP1375 / SS120).